Here is a 379-residue protein sequence, read N- to C-terminus: Transcription termination factor Rho (379 aa).

The Rho RNA-BD domain maps to methionine 1–phenylalanine 68. ATP contacts are provided by residues glycine 111 to glycine 116, lysine 123 to threonine 128, and arginine 154.

Belongs to the Rho family. As to quaternary structure, homohexamer. The homohexamer assembles into an open ring structure.

Functionally, facilitates transcription termination by a mechanism that involves Rho binding to the nascent RNA, activation of Rho's RNA-dependent ATPase activity, and release of the mRNA from the DNA template. This is Transcription termination factor Rho from Karelsulcia muelleri (strain SMDSEM) (Sulcia muelleri).